The chain runs to 507 residues: Cyclic GMP-AMP synthase (507 aa).

The tract at residues 1–146 (MEDPRRRTTA…PRAPRGSRKE (146 aa)) is DNA-binding. A disordered region spans residues 1 to 151 (MEDPRRRTTA…GSRKEPDKLK (151 aa)). A compositionally biased stretch (basic residues) spans 7–18 (RTTAPRAKKPSA). A compositionally biased stretch (basic and acidic residues) spans 44 to 57 (RRAERDGDTTEKPR). Positions 48–59 (RDGDTTEKPRAP) are required for association with the cell membrane. Threonine 52 is modified (phosphothreonine). The required for activation upon DNA viral infection stretch occupies residues 119–132 (RKVVRGPSHRRGAR). The segment covering 121–131 (VVRGPSHRRGA) has biased composition (basic residues). The short motif at 154-159 (LDKLRL) is the Nuclear export signal element. Residue lysine 156 is modified to N6-lactoyllysine. The tract at residues 158 to 201 (RLKRKDISEAAETVNKVVERLLRRMQKRESEFKGVEQLNTGSYY) is DNA-binding. A PolyADP-ribosyl glutamic acid modification is found at glutamate 176. A GTP-binding site is contributed by threonine 197. Serine 199 provides a ligand contact to ATP. At serine 199 the chain carries Phosphoserine. Tyrosine 201 carries the phosphotyrosine modification. The Mg(2+) site is built by glutamate 211 and aspartate 213. Position 213 (aspartate 213) interacts with 2',3'-cGAMP. Lysine 217 is covalently cross-linked (Glycyl lysine isopeptide (Lys-Gly) (interchain with G-Cter in SUMO)). Residue lysine 271 forms a Glycyl lysine isopeptide (Lys-Gly) (interchain with G-Cter in ubiquitin) linkage. A 5-glutamyl polyglutamate modification is found at glutamate 272. Positions 281-291 (DVSVEKEKPGS) match the Nuclear localization signal motif. Glycine 290 serves as a coordination point for 2',3'-cGAMP. Serine 291 carries the phosphoserine; by CDK1 and PKB modification. Position 302 is a 5-glutamyl glutamate (glutamate 302). Aspartate 307 serves as a coordination point for GTP. Aspartate 307 contributes to the Mg(2+) binding site. Aspartate 307 lines the 2',3'-cGAMP pocket. The interaction with collided ribosomes stretch occupies residues 329–370 (QGWLGTKVRTNLRREPFYLVPKNAKDGNSFQGETWRLSFSHT). Residue lysine 335 forms a Glycyl lysine isopeptide (Lys-Gly) (interchain with G-Cter in SUMO); alternate linkage. Residue lysine 335 forms a Glycyl lysine isopeptide (Lys-Gly) (interchain with G-Cter in ubiquitin); alternate linkage. Residues lysine 350 and 364 to 366 (RLS) contribute to the 2',3'-cGAMP site. Residue 364 to 371 (RLSFSHTE) coordinates GTP. Glutamate 371 serves as a coordination point for ATP. A Glycyl lysine isopeptide (Lys-Gly) (interchain with G-Cter in SUMO); alternate cross-link involves residue lysine 372. A Glycyl lysine isopeptide (Lys-Gly) (interchain with G-Cter in ubiquitin); alternate cross-link involves residue lysine 372. Lysine 372 carries the N6-acetyllysine modification. Positions 372–395 (KYILNNHGIEKTCCESSGAKCCRK) are DNA-binding. Zn(2+) is bound at residue histidine 378. A Glycyl lysine isopeptide (Lys-Gly) (interchain with G-Cter in SUMO) cross-link involves residue lysine 382. Lysine 382 is modified (N6-acetyllysine). Zn(2+) contacts are provided by cysteine 384, cysteine 385, and cysteine 392. 2 S-palmitoyl cysteine lipidation sites follow: cysteine 392 and cysteine 393. Residues lysine 399, lysine 402, lysine 409, and lysine 410 each participate in a glycyl lysine isopeptide (Lys-Gly) (interchain with G-Cter in ubiquitin) cross-link. Lysine 402 serves as a coordination point for ATP. N6-acetyllysine is present on lysine 402. The residue at position 420 (serine 420) is a Phosphoserine. 420–424 (SYHVK) provides a ligand contact to ATP. Cysteine 459 carries the S-palmitoyl cysteine lipid modification. Lysine 464 participates in a covalent cross-link: Glycyl lysine isopeptide (Lys-Gly) (interchain with G-Cter in SUMO); alternate. Lysine 464 is covalently cross-linked (Glycyl lysine isopeptide (Lys-Gly) (interchain with G-Cter in ubiquitin); alternate). N6-methyllysine is present on lysine 491.

Belongs to the mab-21 family. As to quaternary structure, monomer in the absence of DNA. Homodimer in presence of dsDNA: forms a 2:2 dimer with two enzymes binding to two DNA molecules. Interacts with nucleosomes; interaction is mainly mediated via histones H2A and H2B and inactivates the nucleotidyltransferase activity by blocking DNA-binding and subsequent activation. Interacts with PQBP1 (via WW domain). Interacts with TRIM14; this interaction recruits USP14, leading to deubiquitinate and stabilize CGAS and promote type I interferon production. Interacts with ZCCHC3; promoting sensing of dsDNA by CGAS. Interacts (when not monomethylated) with (poly-ADP-ribosylated) PARP1; interaction takes place in the nucleus and prevents the formation of the PARP1-TIMELESS complex. Interacts (when monomethylated) with SGF29; interaction with SGF29 prevents interaction with PARP1. Interacts with PCBP2; preventing the formation of liquid-like droplets in which CGAS is activated. Interacts with Irgm1; promoting CGAS degradation. Interacts with DDX41. The cofactor is Mg(2+). Mn(2+) is required as a cofactor. It depends on Zn(2+) as a cofactor. The N-terminal disordered part (1-146) is phosphorylated by AURKB during the G2-M transition, blocking CGAS liquid phase separation and preventing activation. Phosphorylation at Tyr-201 by BLK promotes cytosolic retention. Localizes into the nucleus following dephosphorylation at Tyr-201. Phosphorylation at Ser-420 activates the nucleotidyltransferase activity. Dephosphorylation at Ser-420 by PPP6C impairs its ability to bind GTP, thereby inactivating it. Phosphorylation at Thr-52 and Ser-199 by PRKDC inhibits its cyclic GMP-AMP synthase activity by impairing homodimerization and activation. Phosphorylation at Ser-291 by AKT (AKT1, AKT2 or AKT3) suppresses the nucleotidyltransferase activity. Phosphorylation at Ser-291 by CDK1 during mitosis leads to its inhibition, thereby preventing CGAS activation by self-DNA during mitosis. Dephosphorylated at Ser-291 by protein phosphatase PP1 upon mitotic exit. In terms of processing, ubiquitinated at Lys-402 via 'Lys-48'-linked polyubiquitin chains, leading to its SQSTM1-mediated autophagic degradation. Interaction with TRIM14 promotes recruitment of USP14, leading to deubiquitinate Lys-402 and stabilize CGAS. Ubiquitinated at Lys-372 by RNF185 via 'Lys-27'-linked polyubiquitination, promoting CGAS cyclic GMP-AMP synthase activity. Monoubiquitination at Lys-335 by TRIM56 promotes oligomerization and subsequent activation. Monoubiquitination by TRIM41 promotes CGAS activation. Ubiquitination at Lys-271 and Lys-464 via 'Lys-48'-linked polyubiquitination promotes its degradation. Deubiquitination at Lys-271 by USP29 promotes its stabilization. Deubiquitinated by USP27X, promoting its stabilization. Ubiquitinated at Lys-399 via 'Lys-63'-linked polyubiquitin chains by MARCHF8, leading to the inhibition of its DNA binding ability. In cycling cells, nucleosome-bound CGAS is ubiquitinated at Lys-409 and Lys-410 via 'Lys-48'-linked polyubiquitin chains by the ECS(SPSB3) complex, leading to its degradation: ubiquitination and degradation of nuclear CGAS during G1 and G2 phases is required to promote low intranuclear CGAS abundance before the next mitotic cycle. Post-translationally, sumoylated at Lys-217 and Lys-464 by TRIM38 in uninfected cells and during the early phase of viral infection, promoting its stability by preventing ubiquitination at Lys-271 and Lys-464, and subsequent degradation. Desumoylated by SENP2 during the late phase of viral infection. Sumoylation at Lys-335, Lys-372 and Lys-382 prevents DNA-binding, oligomerization and nucleotidyltransferase activity. Desumoylation at Lys-335, Lys-372 and Lys-382 by SENP7 relieves inhibition and activates CGAS. Polyglutamylated by TTLL6 at Glu-272, leading to impair DNA-binding activity. Monoglutamylated at Glu-302 by TTLL4, leading to impair the nucleotidyltransferase activity. Deglutamylated by AGBL5/CCP5 and AGBL6/CCP6. In terms of processing, acetylation at Lys-372, Lys-382 and Lys-402 inhibits the cyclic GMP-AMP synthase activity. Deacetylated upon cytosolic DNA challenge such as viral infections. Acetylation by KAT5 increases the cyclic GMP-AMP synthase activity by promoting DNA-binding and subsequent activation. Post-translationally, proteolytically cleaved by apoptotic caspases during apoptosis, leading to its inactivation. The damage of the nucleus and the mitochondria during apoptosis leads to leakage of nuclear and mitochondrial DNA, which activate CGAS: cleavage and inactivation during apoptosis in required to prevent cytokine overproduction. Cleaved by CASP7 and CASP3 during virus-induced apoptosis, thereby inactivating it and preventing cytokine overproduction. Cleaved by CASP1 upon DNA virus infection; the cleavage impairs cGAMP production. Also cleaved by the pyroptotic CASP4 during non-canonical inflammasome activation; does not cut at the same sites than CASP1. Degraded via selective autophagy following interaction with Irgm1. Irgm1 promotes CGAS recruitment to autophagosome membranes, promoting its SQSTM1/p62-dependent autophagic degradation. In terms of processing, poly-ADP-ribosylation at Glu-176 by PARP1 impairs DNA-binding, thereby preventing the cyclic GMP-AMP synthase activity. Post-translationally, palmitoylation at Cys-459 by ZDHHC18 impairs DNA-binding, thereby preventing the cyclic GMP-AMP synthase activity. Palmitoylation at Cys-392 and Cys-393 by ZDHHC9 promotes homodimerization and cyclic GMP-AMP synthase activity. Depalmitoylation at Cys-392 and Cys-393 by LYPLAL1 impairs homodimerization and cyclic GMP-AMP synthase activity. Monomethylated at Lys-491 by SETD7. Monomethylation promotes interaction with SGF29, preventing interaction between PARP1 nad SGF29. Demethylation by RIOX1 promotes interaction with PARP1, followed by PARP1 inactivation. In terms of processing, lactylation by AARS2 prevents ability to undergo liquid-liquid phase separation (LLPS), thereby inhibiting CGAS activation.

It localises to the nucleus. Its subcellular location is the chromosome. The protein resides in the cell membrane. The protein localises to the cytoplasm. It is found in the cytosol. It carries out the reaction GTP + ATP = 2',3'-cGAMP + 2 diphosphate. The catalysed reaction is GTP + ATP = pppGp(2'-5')A + diphosphate. The enzyme catalyses pppGp(2'-5')A = 2',3'-cGAMP + diphosphate. The enzyme activity is strongly increased by double-stranded DNA (dsDNA), but not by single-stranded DNA or RNA. DNA-binding induces the formation of liquid-like droplets in which CGAS is activated. Liquid-like droplets also create a selective environment that restricts entry of negative regulators, such as TREX1 or BANF1/BAF, allowing sensing of DNA. A number of mechanisms exist to restrict its activity toward self-DNA. The nucleotidyltransferase activity is inhibited in the nucleus via its association with nucleosomes: interacts with the acidic patch of histones H2A and H2B, thereby blocking DNA-binding and subsequent activation. CGAS is also inactive when associated with mitotic chromatin. Chromatin-bound CGAS cannot be activated by exogenous DNA in mitotic cells: phosphorylation of the N-terminal disordered part by AURKB during the G2-M transition blocks CGAS liquid phase separation and activation. Activity toward self-DNA is inhibited by BANF1/BAF upon acute loss of nuclear membrane integrity: BANF1/BAF acts by outcompeting CGAS for DNA-binding, thereby preventing CGAS activation. DNA-induced activation at micronuclei is also limited by TREX1, which degrades micronuclear DNA upon nuclear envelope rupture, thereby preventing CGAS activation. CGAS can be released from nucleosomes and activated by MRE11 component of the MRN complex, which displaces CGAS from acidic-patch-mediated sequestration. Acetylation at Lys-372, Lys-382 and Lys-402 inhibits the cyclic GMP-AMP synthase activity. Acetylation by KAT5 increases the cyclic GMP-AMP synthase activity by promoting DNA-binding and subsequent activation. Phosphorylation at Ser-291 suppresses the nucleotidyltransferase activity. Phosphorylation at Ser-420 promotes the cyclic GMP-AMP synthase activity. Phosphorylation at Thr-52 and Ser-199 inhibits its cyclic GMP-AMP synthase activity. Ubiquitination at Lys-372 via 'Lys-27'-linked polyubiquitination enhances the cyclic GMP-AMP synthase activity. Monoubiquitination at Lys-335 promotes oligomerization and subsequent activation. Sumoylation at Lys-335, Lys-372 and Lys-382 prevents DNA-binding, oligomerization and nucleotidyltransferase activity. The enzyme activity is impaired by the cleavage by CASP1. In addition to DNA, also activated by collided ribosomes upon translation stress: specifically binds collided ribosomes, promoting its activation and triggering type-I interferon production. In hematopoietic stem cells, binding to circular RNA cia-cGAS inhibits the cyclic GMP-AMP synthase activity. Strongly inhibited by compound RU.521, which is specific for mouse protein. Functionally, nucleotidyltransferase that catalyzes the formation of cyclic GMP-AMP (2',3'-cGAMP) from ATP and GTP and plays a key role in innate immunity. Catalysis involves both the formation of a 2',5' phosphodiester linkage at the GpA step and the formation of a 3',5' phosphodiester linkage at the ApG step, producing c[G(2',5')pA(3',5')p]. Acts as a key DNA sensor: directly binds double-stranded DNA (dsDNA), inducing the formation of liquid-like droplets in which CGAS is activated, leading to synthesis of 2',3'-cGAMP, a second messenger that binds to and activates STING1, thereby triggering type-I interferon production. Preferentially binds long dsDNA (around 45 bp) and forms ladder-like networks that function cooperatively to stabilize individual cGAS-dsDNA complexes. Acts as a key foreign DNA sensor, the presence of double-stranded DNA (dsDNA) in the cytoplasm being a danger signal that triggers the immune responses. Has antiviral activity by sensing the presence of dsDNA from DNA viruses in the cytoplasm. Also acts as an innate immune sensor of infection by retroviruses by detecting the presence of reverse-transcribed DNA in the cytosol. Detection of retroviral reverse-transcribed DNA in the cytosol may be indirect and be mediated via interaction with PQBP1, which directly binds reverse-transcribed retroviral DNA. Also detects the presence of DNA from bacteria. 2',3'-cGAMP can be transferred from producing cells to neighboring cells through gap junctions, leading to promote STING1 activation and convey immune response to connecting cells. 2',3'-cGAMP can also be transferred between cells by virtue of packaging within viral particles contributing to IFN-induction in newly infected cells in a cGAS-independent but STING1-dependent manner. Also senses the presence of neutrophil extracellular traps (NETs) that are translocated to the cytosol following phagocytosis, leading to synthesis of 2',3'-cGAMP. In addition to foreign DNA, can also be activated by endogenous nuclear or mitochondrial DNA. When self-DNA leaks into the cytosol during cellular stress (such as mitochondrial stress, DNA damage, mitotic arrest or senescence), or is present in form of cytosolic micronuclei, CGAS is activated leading to a state of sterile inflammation. Acts as a regulator of cellular senescence by binding to cytosolic chromatin fragments that are present in senescent cells, leading to trigger type-I interferon production via STING1 and promote cellular senescence. Also involved in the inflammatory response to genome instability and double-stranded DNA breaks: acts by localizing to micronuclei arising from genome instability. Micronuclei, which as frequently found in cancer cells, consist of chromatin surrounded by its own nuclear membrane: following breakdown of the micronuclear envelope, a process associated with chromothripsis, CGAS binds self-DNA exposed to the cytosol, leading to 2',3'-cGAMP synthesis and subsequent activation of STING1 and type-I interferon production. In a healthy cell, CGAS is however kept inactive even in cellular events that directly expose it to self-DNA, such as mitosis, when cGAS associates with chromatin directly after nuclear envelope breakdown or remains in the form of postmitotic persistent nuclear cGAS pools bound to chromatin. Nuclear CGAS is inactivated by chromatin via direct interaction with nucleosomes, which block CGAS from DNA binding and thus prevent CGAS-induced autoimmunity. Also acts as a suppressor of DNA repair in response to DNA damage: inhibits homologous recombination repair by interacting with PARP1, the CGAS-PARP1 interaction leading to impede the formation of the PARP1-TIMELESS complex. In addition to DNA, also sense translation stress: in response to translation stress, translocates to the cytosol and associates with collided ribosomes, promoting its activation and triggering type-I interferon production. The chain is Cyclic GMP-AMP synthase from Mus musculus (Mouse).